A 220-amino-acid chain; its full sequence is Iron-sulfur cluster repair protein YtfE (220 aa).

Belongs to the RIC family. YtfE subfamily. As to quaternary structure, homodimer.

It localises to the cytoplasm. Its function is as follows. Di-iron-containing protein involved in the repair of iron-sulfur clusters damaged by oxidative and nitrosative stress conditions. In Salmonella paratyphi A (strain AKU_12601), this protein is Iron-sulfur cluster repair protein YtfE.